A 518-amino-acid polypeptide reads, in one-letter code: Glutamate--cysteine ligase (518 aa).

Belongs to the glutamate--cysteine ligase type 1 family. Type 1 subfamily.

The enzyme catalyses L-cysteine + L-glutamate + ATP = gamma-L-glutamyl-L-cysteine + ADP + phosphate + H(+). It participates in sulfur metabolism; glutathione biosynthesis; glutathione from L-cysteine and L-glutamate: step 1/2. The polypeptide is Glutamate--cysteine ligase (Escherichia coli O139:H28 (strain E24377A / ETEC)).